Here is a 252-residue protein sequence, read N- to C-terminus: RNA-binding protein 7 (252 aa).

One can recognise an RRM domain in the interval 9–86 (RTLFVGNLDP…RQLNIKFKTG (78 aa)). Polar residues-rich tracts occupy residues 88–107 (SHIN…SPAN) and 119–137 (QMGS…PFSS). Disordered regions lie at residues 88-137 (SHIN…PFSS) and 171-252 (QLRG…WKHF). 2 stretches are compositionally biased toward basic and acidic residues: residues 211 to 230 (ERNR…DRSG) and 237 to 252 (PPDR…WKHF).

As to quaternary structure, component of the nuclear exosome targeting (NEXT) complex composed of MTREX, ZCCHC8, and RBM7 that directs a subset of non-coding short-lived RNAs for exosomal degradation.

The protein resides in the nucleus. It localises to the nucleoplasm. Functionally, RNA-binding subunit of the trimeric nuclear exosome targeting (NEXT) complex, a complex that functions as an RNA exosome cofactor that directs a subset of non-coding short-lived RNAs for exosomal degradation. NEXT is involved in surveillance and turnover of aberrant transcripts and non-coding RNAs. Binds preferentially polyuridine sequences and associates with newly synthesized RNAs, including pre-mRNAs and short-lived exosome substrates such as promoter upstream transcripts (PROMPTs), enhancer RNAs (eRNAs), and 3'-extended products from small nuclear RNAs (snRNAs). This Danio rerio (Zebrafish) protein is RNA-binding protein 7.